The following is a 528-amino-acid chain: MSMKWTSALLLIQLSCYLSFGSCGKVLVWPTEFSHWMNIKTILDELVQRGHEVTVLAYSTSILPDPNNPSPLKFEICPTSLTETEFQDSVTQLVKRWSDIRKDTFWPHFLHVQEMMWTYGDMIRKFCKDVVSNKKLMKKLQESRFDVVLADAISPCGELLAELLKIPFVYSLRFSPGYALEKHGGGFLFPPSYVPVTMSELRDQMTFMERVQNMIYMVYFDFWFQVWDVKNWDQFYSKVLGRPTTLFEIMAKAEIWLIRNYWDFQFPHPLLPNVEFVGGLHCKPAKPLPKEMEEFVQSSGDNGVVVFSLGSMVSNMSEERANVIASALAKIPQKVLWRFDGNKPDTLGLNTQLYKWLPQNDLLGHPKTRAFITHGGANGIYEAIYHGIPMVGVPLFADQPDNIAHMKAKGAAVRLDFDTMSSTDLLNALKTVINDPIYKENAMKLSSIHHDQPVKPLDRAVFWIEFVMRHKGAKHLRVAAHDLTWFQYHSLDVIGFLLACVATVIFIITKCLFCVWKFVRTRKKGKRD.

The signal sequence occupies residues 1-21 (MSMKWTSALLLIQLSCYLSFG). An N6-succinyllysine modification is found at lysine 135. Asparagine 315 carries an N-linked (GlcNAc...) asparagine glycan. Residues 493–513 (VIGFLLACVATVIFIITKCLF) form a helical membrane-spanning segment.

Belongs to the UDP-glycosyltransferase family. As to expression, expressed in liver, ovary, prostate, colon, kidney, pancreas, brain, cerebellum, mammary gland and epididymis. Not expressed in small intestine, spleen, bladder, adrenal gland and testis.

The protein resides in the microsome membrane. The protein localises to the endoplasmic reticulum membrane. It carries out the reaction glucuronate acceptor + UDP-alpha-D-glucuronate = acceptor beta-D-glucuronoside + UDP + H(+). Its function is as follows. UDPGT is of major importance in the conjugation and subsequent elimination of potentially toxic xenobiotics and endogenous compounds. This isozyme displays activity toward several classes of xenobiotic substrates: eugenol, 4-methyllumbelliferone, p-nitrophenol, 1-naphthol, p,p'-biphenol, naringenin and o,o'-biphenol. Active also on 3a-hydroxy and 17b-hydroxy positions of steroids. Contributes to the formation of androgen glucuronide in extrahepatic steroid target tissues such as the prostate. This chain is UDP-glucuronosyltransferase 2B19 (UGT2B19), found in Macaca fascicularis (Crab-eating macaque).